A 779-amino-acid chain; its full sequence is Subtilisin-like protease SBT3.18 (779 aa).

An N-terminal signal peptide occupies residues 1–21 (MYFWVMFFTLMIKVKLYITNG). Positions 22–109 (DIFQNRPTVY…VFKSKSLKLH (88 aa)) are cleaved as a propeptide — activation peptide. The Inhibitor I9 domain maps to 30 to 109 (VYVVYLGANR…VFKSKSLKLH (80 aa)). An N-linked (GlcNAc...) asparagine glycan is attached at Asn-84. The Peptidase S8 domain occupies 113-621 (SWDFLGLAVD…AGHINPLKAM (509 aa)). Active-site charge relay system residues include Asp-144 and His-221. Asn-236 and Asn-406 each carry an N-linked (GlcNAc...) asparagine glycan. The active-site Charge relay system is Ser-553.

It belongs to the peptidase S8 family.

Its subcellular location is the secreted. The polypeptide is Subtilisin-like protease SBT3.18 (Arabidopsis thaliana (Mouse-ear cress)).